We begin with the raw amino-acid sequence, 264 residues long: 4-hydroxy-tetrahydrodipicolinate reductase (264 aa).

Residue 8 to 13 (GPRGKM) participates in NAD(+) binding. Residue K36 coordinates NADP(+). NAD(+) is bound by residues 97–99 (GTT) and 123–126 (APNF). The active-site Proton donor/acceptor is H153. H154 lines the (S)-2,3,4,5-tetrahydrodipicolinate pocket. The Proton donor role is filled by K157. 163-164 (GT) provides a ligand contact to (S)-2,3,4,5-tetrahydrodipicolinate.

Belongs to the DapB family.

The protein localises to the cytoplasm. The catalysed reaction is (S)-2,3,4,5-tetrahydrodipicolinate + NAD(+) + H2O = (2S,4S)-4-hydroxy-2,3,4,5-tetrahydrodipicolinate + NADH + H(+). The enzyme catalyses (S)-2,3,4,5-tetrahydrodipicolinate + NADP(+) + H2O = (2S,4S)-4-hydroxy-2,3,4,5-tetrahydrodipicolinate + NADPH + H(+). The protein operates within amino-acid biosynthesis; L-lysine biosynthesis via DAP pathway; (S)-tetrahydrodipicolinate from L-aspartate: step 4/4. Functionally, catalyzes the conversion of 4-hydroxy-tetrahydrodipicolinate (HTPA) to tetrahydrodipicolinate. The polypeptide is 4-hydroxy-tetrahydrodipicolinate reductase (Halalkalibacterium halodurans (strain ATCC BAA-125 / DSM 18197 / FERM 7344 / JCM 9153 / C-125) (Bacillus halodurans)).